The following is a 497-amino-acid chain: Bifunctional protein GlmU (497 aa).

Residues 1–252 (MSQPSARPSA…VWEVEGANDR (252 aa)) are pyrophosphorylase. UDP-N-acetyl-alpha-D-glucosamine contacts are provided by residues 14–17 (LAAG), lysine 28, glutamine 86, 91–92 (GT), 115–117 (YGD), glycine 154, glutamate 169, asparagine 192, and asparagine 250. Aspartate 117 lines the Mg(2+) pocket. Asparagine 250 lines the Mg(2+) pocket. A linker region spans residues 253–273 (RQLSDLGRRLNERVLRHWMKE). The interval 274–497 (GVTVVDPSST…AGAEGSGAQG (224 aa)) is N-acetyltransferase. The UDP-N-acetyl-alpha-D-glucosamine site is built by arginine 355 and lysine 373. The active-site Proton acceptor is the histidine 385. 2 residues coordinate UDP-N-acetyl-alpha-D-glucosamine: tyrosine 388 and asparagine 399. Acetyl-CoA contacts are provided by residues 408–409 (NY), serine 427, and alanine 445. The tract at residues 473 to 497 (PAKRPGTSSAEAARAAGAEGSGAQG) is disordered. Low complexity predominate over residues 480–490 (SSAEAARAAGA).

In the N-terminal section; belongs to the N-acetylglucosamine-1-phosphate uridyltransferase family. It in the C-terminal section; belongs to the transferase hexapeptide repeat family. In terms of assembly, homotrimer. The cofactor is Mg(2+).

The protein localises to the cytoplasm. It carries out the reaction alpha-D-glucosamine 1-phosphate + acetyl-CoA = N-acetyl-alpha-D-glucosamine 1-phosphate + CoA + H(+). The enzyme catalyses N-acetyl-alpha-D-glucosamine 1-phosphate + UTP + H(+) = UDP-N-acetyl-alpha-D-glucosamine + diphosphate. It participates in nucleotide-sugar biosynthesis; UDP-N-acetyl-alpha-D-glucosamine biosynthesis; N-acetyl-alpha-D-glucosamine 1-phosphate from alpha-D-glucosamine 6-phosphate (route II): step 2/2. The protein operates within nucleotide-sugar biosynthesis; UDP-N-acetyl-alpha-D-glucosamine biosynthesis; UDP-N-acetyl-alpha-D-glucosamine from N-acetyl-alpha-D-glucosamine 1-phosphate: step 1/1. It functions in the pathway bacterial outer membrane biogenesis; LPS lipid A biosynthesis. Its function is as follows. Catalyzes the last two sequential reactions in the de novo biosynthetic pathway for UDP-N-acetylglucosamine (UDP-GlcNAc). The C-terminal domain catalyzes the transfer of acetyl group from acetyl coenzyme A to glucosamine-1-phosphate (GlcN-1-P) to produce N-acetylglucosamine-1-phosphate (GlcNAc-1-P), which is converted into UDP-GlcNAc by the transfer of uridine 5-monophosphate (from uridine 5-triphosphate), a reaction catalyzed by the N-terminal domain. In Micrococcus luteus (strain ATCC 4698 / DSM 20030 / JCM 1464 / CCM 169 / CCUG 5858 / IAM 1056 / NBRC 3333 / NCIMB 9278 / NCTC 2665 / VKM Ac-2230) (Micrococcus lysodeikticus), this protein is Bifunctional protein GlmU.